The primary structure comprises 237 residues: Phosphoribosylaminoimidazole-succinocarboxamide synthase (237 aa).

Belongs to the SAICAR synthetase family.

The catalysed reaction is 5-amino-1-(5-phospho-D-ribosyl)imidazole-4-carboxylate + L-aspartate + ATP = (2S)-2-[5-amino-1-(5-phospho-beta-D-ribosyl)imidazole-4-carboxamido]succinate + ADP + phosphate + 2 H(+). It participates in purine metabolism; IMP biosynthesis via de novo pathway; 5-amino-1-(5-phospho-D-ribosyl)imidazole-4-carboxamide from 5-amino-1-(5-phospho-D-ribosyl)imidazole-4-carboxylate: step 1/2. The protein is Phosphoribosylaminoimidazole-succinocarboxamide synthase of Erwinia tasmaniensis (strain DSM 17950 / CFBP 7177 / CIP 109463 / NCPPB 4357 / Et1/99).